A 518-amino-acid chain; its full sequence is Bifunctional purine biosynthesis protein PurH (518 aa).

Positions Met1–Cys144 constitute an MGS-like domain.

The protein belongs to the PurH family.

The enzyme catalyses (6R)-10-formyltetrahydrofolate + 5-amino-1-(5-phospho-beta-D-ribosyl)imidazole-4-carboxamide = 5-formamido-1-(5-phospho-D-ribosyl)imidazole-4-carboxamide + (6S)-5,6,7,8-tetrahydrofolate. The catalysed reaction is IMP + H2O = 5-formamido-1-(5-phospho-D-ribosyl)imidazole-4-carboxamide. It participates in purine metabolism; IMP biosynthesis via de novo pathway; 5-formamido-1-(5-phospho-D-ribosyl)imidazole-4-carboxamide from 5-amino-1-(5-phospho-D-ribosyl)imidazole-4-carboxamide (10-formyl THF route): step 1/1. The protein operates within purine metabolism; IMP biosynthesis via de novo pathway; IMP from 5-formamido-1-(5-phospho-D-ribosyl)imidazole-4-carboxamide: step 1/1. The chain is Bifunctional purine biosynthesis protein PurH from Lactococcus lactis subsp. lactis (strain IL1403) (Streptococcus lactis).